A 131-amino-acid chain; its full sequence is Fumarate reductase subunit C (131 aa).

The next 3 helical transmembrane spans lie at 30-50 (EGTA…LFAL), 61-81 (IGFL…AAAL), and 110-130 (IKGL…VALF).

Belongs to the FrdC family. In terms of assembly, part of an enzyme complex containing four subunits: a flavoprotein (FrdA), an iron-sulfur protein (FrdB), and two hydrophobic anchor proteins (FrdC and FrdD).

It is found in the cell inner membrane. Two distinct, membrane-bound, FAD-containing enzymes are responsible for the catalysis of fumarate and succinate interconversion; fumarate reductase is used in anaerobic growth, and succinate dehydrogenase is used in aerobic growth. Anchors the catalytic components of the fumarate reductase complex to the cell inner membrane, binds quinones. This is Fumarate reductase subunit C from Klebsiella pneumoniae subsp. pneumoniae (strain ATCC 700721 / MGH 78578).